We begin with the raw amino-acid sequence, 419 residues long: 3-isopropylmalate dehydratase large subunit (419 aa).

3 residues coordinate [4Fe-4S] cluster: cysteine 300, cysteine 360, and cysteine 363.

It belongs to the aconitase/IPM isomerase family. LeuC type 2 subfamily. In terms of assembly, heterodimer of LeuC and LeuD. [4Fe-4S] cluster is required as a cofactor.

The catalysed reaction is (2R,3S)-3-isopropylmalate = (2S)-2-isopropylmalate. Its pathway is amino-acid biosynthesis; L-leucine biosynthesis; L-leucine from 3-methyl-2-oxobutanoate: step 2/4. In terms of biological role, catalyzes the isomerization between 2-isopropylmalate and 3-isopropylmalate, via the formation of 2-isopropylmaleate. The sequence is that of 3-isopropylmalate dehydratase large subunit from Acetivibrio thermocellus (strain ATCC 27405 / DSM 1237 / JCM 9322 / NBRC 103400 / NCIMB 10682 / NRRL B-4536 / VPI 7372) (Clostridium thermocellum).